A 514-amino-acid chain; its full sequence is Transmembrane protein 151B (514 aa).

The segment at 1–40 (MSAEGEPAEAVAETPANSPGEEAAAAAATTDVDVREEQRP) is disordered. Helical transmembrane passes span 57–77 (CLLL…CQVT), 104–124 (YVYI…VECW), and 286–306 (PWYV…SWPL).

The protein belongs to the TMEM151 family.

It localises to the membrane. The protein is Transmembrane protein 151B (tmem151b) of Xenopus tropicalis (Western clawed frog).